Reading from the N-terminus, the 272-residue chain is UPF0759 protein YecE (272 aa).

It belongs to the UPF0759 family.

The sequence is that of UPF0759 protein YecE (yecE) from Escherichia coli (strain K12).